The sequence spans 238 residues: MTDTAENQTPNDRQAGHPRSIRSFVLRQSHMTAAQQRAIDTLWDSFGIDYQATPVDLDANFGSNRPKILEIGFGMGTATAEIALRLPETDFLAIDVHGPGVGNLLKLINENHLENIRVMRHDAVEVVENMLQDGSLDGIHIFFPDPWHKKRHHKRRLIQAPFIAKLLPKLKTGGYIHLATDWEEYAQQMLEVLSSFDSLQNTATDYAPTPDYRPETKFEARGKRLGHGVWDLVFKRIR.

Polar residues predominate over residues 1-12 (MTDTAENQTPND). Positions 1-20 (MTDTAENQTPNDRQAGHPRS) are disordered. Residues Glu70, Asp95, Asp122, and Asp145 each contribute to the S-adenosyl-L-methionine site. The active site involves Asp145. Substrate contacts are provided by residues Lys149, Asp181, and 216 to 219 (TKFE).

This sequence belongs to the class I-like SAM-binding methyltransferase superfamily. TrmB family.

It carries out the reaction guanosine(46) in tRNA + S-adenosyl-L-methionine = N(7)-methylguanosine(46) in tRNA + S-adenosyl-L-homocysteine. It functions in the pathway tRNA modification; N(7)-methylguanine-tRNA biosynthesis. In terms of biological role, catalyzes the formation of N(7)-methylguanine at position 46 (m7G46) in tRNA. In Neisseria meningitidis serogroup C (strain 053442), this protein is tRNA (guanine-N(7)-)-methyltransferase.